The following is a 315-amino-acid chain: Ribose-phosphate pyrophosphokinase (315 aa).

Residues 37-39 (DSE) and 96-97 (RQ) contribute to the ATP site. The Mg(2+) site is built by His-131 and Asp-170. The active site involves Lys-194. D-ribose 5-phosphate is bound by residues Arg-196, Asp-220, and 224 to 228 (DTGGT).

It belongs to the ribose-phosphate pyrophosphokinase family. Class I subfamily. In terms of assembly, homohexamer. It depends on Mg(2+) as a cofactor.

Its subcellular location is the cytoplasm. It catalyses the reaction D-ribose 5-phosphate + ATP = 5-phospho-alpha-D-ribose 1-diphosphate + AMP + H(+). It participates in metabolic intermediate biosynthesis; 5-phospho-alpha-D-ribose 1-diphosphate biosynthesis; 5-phospho-alpha-D-ribose 1-diphosphate from D-ribose 5-phosphate (route I): step 1/1. Involved in the biosynthesis of the central metabolite phospho-alpha-D-ribosyl-1-pyrophosphate (PRPP) via the transfer of pyrophosphoryl group from ATP to 1-hydroxyl of ribose-5-phosphate (Rib-5-P). This chain is Ribose-phosphate pyrophosphokinase, found in Marinomonas sp. (strain MWYL1).